Here is a 417-residue protein sequence, read N- to C-terminus: Serine hydroxymethyltransferase 2 (417 aa).

(6S)-5,6,7,8-tetrahydrofolate is bound by residues leucine 121 and 125–127 (GHL). Lysine 229 carries the N6-(pyridoxal phosphate)lysine modification. 354 to 356 (SPF) is a binding site for (6S)-5,6,7,8-tetrahydrofolate.

Belongs to the SHMT family. Homodimer. Requires pyridoxal 5'-phosphate as cofactor.

It localises to the cytoplasm. It catalyses the reaction (6R)-5,10-methylene-5,6,7,8-tetrahydrofolate + glycine + H2O = (6S)-5,6,7,8-tetrahydrofolate + L-serine. It participates in one-carbon metabolism; tetrahydrofolate interconversion. Its pathway is amino-acid biosynthesis; glycine biosynthesis; glycine from L-serine: step 1/1. Its function is as follows. Catalyzes the reversible interconversion of serine and glycine with tetrahydrofolate (THF) serving as the one-carbon carrier. This reaction serves as the major source of one-carbon groups required for the biosynthesis of purines, thymidylate, methionine, and other important biomolecules. Also exhibits THF-independent aldolase activity toward beta-hydroxyamino acids, producing glycine and aldehydes, via a retro-aldol mechanism. The polypeptide is Serine hydroxymethyltransferase 2 (Pseudomonas fluorescens (strain Pf0-1)).